Here is a 233-residue protein sequence, read N- to C-terminus: Serine-rich 25 kDa antigen protein (233 aa).

The segment at 35–219 (KNEASPEKLE…DNNNLDAASS (185 aa)) is disordered. Over residues 38–53 (ASPEKLEEAEEKEKSS) the composition is skewed to basic and acidic residues. Residues 61-71 (SNEDNEDDEDE) show a composition bias toward acidic residues. Tandem repeats lie at residues 82 to 93 (SSSDKPDNKPEA), 102 to 113 (SSSDKPDNKPEA), 114 to 125 (SSSDKPDNKPEA), 126 to 137 (SSSDKPDNKPEA), 138 to 149 (SSSDKPDNKPEA), 150 to 161 (SSSDKPDNKPEA), 162 to 169 (SSTNKPEA), 170 to 177 (SSTNKPEA), 178 to 185 (SSTNKPEA), and 186 to 193 (SSTNKPEA). The 6 X 12 AA tandem repeats of S-S-S-D-K-P-D-N-K-P-E-A stretch occupies residues 82–161 (SSSDKPDNKP…SDKPDNKPEA (80 aa)). Over residues 83–159 (SSDKPDNKPE…SSSDKPDNKP (77 aa)) the composition is skewed to basic and acidic residues. A compositionally biased stretch (polar residues) spans 160-192 (EASSTNKPEASSTNKPEASSTNKPEASSTNKPE). Residues 162 to 193 (SSTNKPEASSTNKPEASSTNKPEASSTNKPEA) are 4 X 8 AA tandem repeats of S-S-T-N-K-P-E-A. Residues 193–219 (ASSTSNSNDKSGSSSDNDNNNLDAASS) show a composition bias toward low complexity.

In terms of processing, phosphorylated on serine residue(s). Post-translationally, O-glycosylated; glycans consist of single N-acetylglucosamine residues. O-acylated; acyl group is probably palmitate, not myristate.

It localises to the cell membrane. Its function is as follows. Plays a role in the adhesion to host cells. Involved in the adhesion to host apoptotic cells thereby facilitating their phagocytosis. This chain is Serine-rich 25 kDa antigen protein, found in Entamoeba histolytica (strain ATCC 30459 / HM-1:IMSS / ABRM).